A 591-amino-acid chain; its full sequence is Chaperone protein DnaK (591 aa).

Thr175 carries the phosphothreonine; by autocatalysis modification. A compositionally biased stretch (low complexity) spans 568–577 (AQAAEFANKQ). A disordered region spans residues 568–591 (AQAAEFANKQNESDPNNNSSEQNN). Polar residues predominate over residues 580 to 591 (SDPNNNSSEQNN).

Belongs to the heat shock protein 70 family.

Functionally, acts as a chaperone. The protein is Chaperone protein DnaK of Mycoplasma mycoides subsp. mycoides SC (strain CCUG 32753 / NCTC 10114 / PG1).